Here is a 206-residue protein sequence, read N- to C-terminus: 3-isopropylmalate dehydratase small subunit (206 aa).

It belongs to the LeuD family. LeuD type 1 subfamily. Heterodimer of LeuC and LeuD.

The enzyme catalyses (2R,3S)-3-isopropylmalate = (2S)-2-isopropylmalate. It participates in amino-acid biosynthesis; L-leucine biosynthesis; L-leucine from 3-methyl-2-oxobutanoate: step 2/4. Its function is as follows. Catalyzes the isomerization between 2-isopropylmalate and 3-isopropylmalate, via the formation of 2-isopropylmaleate. In Acidobacterium capsulatum (strain ATCC 51196 / DSM 11244 / BCRC 80197 / JCM 7670 / NBRC 15755 / NCIMB 13165 / 161), this protein is 3-isopropylmalate dehydratase small subunit.